The sequence spans 200 residues: ATP-dependent Clp protease proteolytic subunit 2 (200 aa).

The Nucleophile role is filled by serine 99. Residue histidine 124 is part of the active site.

This sequence belongs to the peptidase S14 family. Fourteen ClpP subunits assemble into 2 heptameric rings which stack back to back to give a disk-like structure with a central cavity, resembling the structure of eukaryotic proteasomes.

It localises to the cytoplasm. It catalyses the reaction Hydrolysis of proteins to small peptides in the presence of ATP and magnesium. alpha-casein is the usual test substrate. In the absence of ATP, only oligopeptides shorter than five residues are hydrolyzed (such as succinyl-Leu-Tyr-|-NHMec, and Leu-Tyr-Leu-|-Tyr-Trp, in which cleavage of the -Tyr-|-Leu- and -Tyr-|-Trp bonds also occurs).. Functionally, cleaves peptides in various proteins in a process that requires ATP hydrolysis. Has a chymotrypsin-like activity. Plays a major role in the degradation of misfolded proteins. This is ATP-dependent Clp protease proteolytic subunit 2 from Treponema denticola (strain ATCC 35405 / DSM 14222 / CIP 103919 / JCM 8153 / KCTC 15104).